A 299-amino-acid polypeptide reads, in one-letter code: Myozenin-1 (299 aa).

The tract at residues 1–34 (MPLSGTPAPNKKRKSSKLIMELTGGGQESSGLNL) is disordered. S82 carries the phosphoserine modification. Residues 102 to 174 (GQGFSYSKSN…TGSGDQAGGE (73 aa)) are disordered. Composition is skewed to gly residues over residues 112-125 (GRGG…GSAG) and 137-173 (SGSG…QAGG).

The protein belongs to the myozenin family. As to quaternary structure, interacts with ACTN2, ACTN3, FLNA, FLNB, FLNC, LDB3, PPP3CA and TCAP. Interacts via its C-terminal region with MYOT. Expressed primarily in skeletal muscle. Detected at lower levels in heart, prostate and pancreas.

It localises to the nucleus. The protein localises to the cell projection. Its subcellular location is the pseudopodium. Functionally, myozenins may serve as intracellular binding proteins involved in linking Z-disk proteins such as alpha-actinin, gamma-filamin, TCAP/telethonin, LDB3/ZASP and localizing calcineurin signaling to the sarcomere. Plays an important role in the modulation of calcineurin signaling. May play a role in myofibrillogenesis. The polypeptide is Myozenin-1 (Homo sapiens (Human)).